A 365-amino-acid chain; its full sequence is NAD(P)H-quinone oxidoreductase subunit 1, chloroplastic (365 aa).

8 consecutive transmembrane segments (helical) span residues 27-47 (VWIF…VLVI), 98-118 (FSIG…VIPF), 129-149 (IGIF…LMSG), 165-185 (AAQS…ISLL), 203-223 (FWGW…ISSL), 253-273 (FGLF…FVTI), 302-322 (IFGT…FLFI), and 345-365 (FLLP…LFSL).

This sequence belongs to the complex I subunit 1 family. In terms of assembly, NDH is composed of at least 16 different subunits, 5 of which are encoded in the nucleus.

The protein resides in the plastid. It localises to the chloroplast thylakoid membrane. It catalyses the reaction a plastoquinone + NADH + (n+1) H(+)(in) = a plastoquinol + NAD(+) + n H(+)(out). The catalysed reaction is a plastoquinone + NADPH + (n+1) H(+)(in) = a plastoquinol + NADP(+) + n H(+)(out). NDH shuttles electrons from NAD(P)H:plastoquinone, via FMN and iron-sulfur (Fe-S) centers, to quinones in the photosynthetic chain and possibly in a chloroplast respiratory chain. The immediate electron acceptor for the enzyme in this species is believed to be plastoquinone. Couples the redox reaction to proton translocation, and thus conserves the redox energy in a proton gradient. The chain is NAD(P)H-quinone oxidoreductase subunit 1, chloroplastic from Arabis hirsuta (Hairy rock-cress).